The chain runs to 209 residues: Casparian strip membrane protein 1 (209 aa).

The segment at 1–35 is disordered; that stretch reads MKTGESTAIDIAPETNNSGPIGKKKSTTPLLAAPV. At 1 to 46 the chain is on the cytoplasmic side; that stretch reads MKTGESTAIDIAPETNNSGPIGKKKSTTPLLAAPVPDRGTHRMKRG. Residues 47 to 67 traverse the membrane as a helical segment; it reads LAIFDFVLRIGVLASALAAAA. The Extracellular portion of the chain corresponds to 68-96; the sequence is AMGTSEQTLPFFTQFFQFEASYDDLPTFQ. The helical transmembrane segment at 97-117 threads the bilayer; that stretch reads FFVVAMAVVAGYVVLSIPFSI. Topologically, residues 118–129 are cytoplasmic; the sequence is VCIIRPHAAGPR. Residues 130–150 form a helical membrane-spanning segment; sequence VLLLILDSVALTLNTAAAGAA. At 151 to 182 the chain is on the extracellular side; the sequence is AAVVSLAHSGNSSTNWLAICNQFGDFCQQASG. Residue Asn-161 is glycosylated (N-linked (GlcNAc...) asparagine). Residues 183-203 traverse the membrane as a helical segment; the sequence is AVVGSFAAVLLFLLLILFSAL. Residues 204–209 are Cytoplasmic-facing; it reads SLKNSH.

Belongs to the Casparian strip membrane proteins (CASP) family. In terms of assembly, homodimer and heterodimers.

It localises to the cell membrane. Regulates membrane-cell wall junctions and localized cell wall deposition. Required for establishment of the Casparian strip membrane domain (CSD) and the subsequent formation of Casparian strips, a cell wall modification of the root endodermis that determines an apoplastic barrier between the intraorganismal apoplasm and the extraorganismal apoplasm and prevents lateral diffusion. The protein is Casparian strip membrane protein 1 of Cucumis melo (Muskmelon).